Reading from the N-terminus, the 110-residue chain is Insulin (110 aa).

The N-terminal stretch at methionine 1 to alanine 24 is a signal peptide. 3 cysteine pairs are disulfide-bonded: cysteine 31-cysteine 96, cysteine 43-cysteine 109, and cysteine 95-cysteine 100. Residues glutamate 57–glutamine 87 constitute a propeptide, c peptide.

This sequence belongs to the insulin family. As to quaternary structure, heterodimer of a B chain and an A chain linked by two disulfide bonds.

The protein localises to the secreted. Functionally, insulin decreases blood glucose concentration. It increases cell permeability to monosaccharides, amino acids and fatty acids. It accelerates glycolysis, the pentose phosphate cycle, and glycogen synthesis in liver. This Ictidomys tridecemlineatus (Thirteen-lined ground squirrel) protein is Insulin (INS).